We begin with the raw amino-acid sequence, 196 residues long: UPF0314 protein Oant_0840 (196 aa).

4 helical membrane passes run 15 to 35 (WGLG…WLYF), 65 to 85 (WYTL…TVIA), 127 to 147 (FGDS…GFLI), and 151 to 171 (LPTK…LIVI).

This sequence belongs to the UPF0314 family.

The protein resides in the cell membrane. In Brucella anthropi (strain ATCC 49188 / DSM 6882 / CCUG 24695 / JCM 21032 / LMG 3331 / NBRC 15819 / NCTC 12168 / Alc 37) (Ochrobactrum anthropi), this protein is UPF0314 protein Oant_0840.